Here is a 179-residue protein sequence, read N- to C-terminus: ATP synthase subunit delta (179 aa).

The protein belongs to the ATPase delta chain family. F-type ATPases have 2 components, F(1) - the catalytic core - and F(0) - the membrane proton channel. F(1) has five subunits: alpha(3), beta(3), gamma(1), delta(1), epsilon(1). F(0) has three main subunits: a(1), b(2) and c(10-14). The alpha and beta chains form an alternating ring which encloses part of the gamma chain. F(1) is attached to F(0) by a central stalk formed by the gamma and epsilon chains, while a peripheral stalk is formed by the delta and b chains.

It is found in the cell inner membrane. Functionally, f(1)F(0) ATP synthase produces ATP from ADP in the presence of a proton or sodium gradient. F-type ATPases consist of two structural domains, F(1) containing the extramembraneous catalytic core and F(0) containing the membrane proton channel, linked together by a central stalk and a peripheral stalk. During catalysis, ATP synthesis in the catalytic domain of F(1) is coupled via a rotary mechanism of the central stalk subunits to proton translocation. This protein is part of the stalk that links CF(0) to CF(1). It either transmits conformational changes from CF(0) to CF(1) or is implicated in proton conduction. This is ATP synthase subunit delta from Burkholderia mallei (strain NCTC 10247).